Consider the following 493-residue polypeptide: Glycylpeptide N-tetradecanoyltransferase (493 aa).

Position 45–48 (45–48 (HKFW)) interacts with tetradecanoyl-CoA. Residues 53–73 (VPQITGSGAPAPIEEGPIDDP) form a disordered region. Tetradecanoyl-CoA is bound by residues 182–184 (LCV) and 190–194 (SKRLA). Leu-493 serves as the catalytic Proton acceptor; via carboxylate.

The protein belongs to the NMT family. In terms of assembly, monomer.

The protein resides in the cytoplasm. The catalysed reaction is N-terminal glycyl-[protein] + tetradecanoyl-CoA = N-tetradecanoylglycyl-[protein] + CoA + H(+). Adds a myristoyl group to the N-terminal glycine residue of certain cellular proteins. This Cryptococcus neoformans var. neoformans serotype D (strain B-3501A) (Filobasidiella neoformans) protein is Glycylpeptide N-tetradecanoyltransferase.